The chain runs to 92 residues: Large ribosomal subunit protein bL27 (92 aa).

Positions 1–20 (MAHKKAGGSTRNGRDSNPKY) are disordered.

The protein belongs to the bacterial ribosomal protein bL27 family.

The polypeptide is Large ribosomal subunit protein bL27 (Legionella pneumophila (strain Paris)).